A 406-amino-acid chain; its full sequence is Sorting nexin-6 (406 aa).

The residue at position 1 (M1) is an N-acetylmethionine. N-acetylmethionine; in Sorting nexin-6, N-terminally processed is present on M2. The tract at residues 2–179 (MEGLDDGPDF…NQDLSVRGKN (178 aa)) is interaction with PIM1. Residues 26–173 (LQSDAALQVD…HVFLEYNQDL (148 aa)) form the PX domain. A 1,2-diacyl-sn-glycero-3-phospho-(1D-myo-inositol-4,5-bisphosphate) is bound by residues 41–47 (SERDKVK), 100–106 (FDASREK), and 114–117 (EGSM). 2 positions are modified to phosphoserine: S116 and S194. Positions 182–199 (EKLEDFFKNMVKSADGVI) are membrane-binding amphipathic helix. One can recognise a BAR domain in the interval 203 to 406 (VKDVDDFFEH…NCLAVLNGDT (204 aa)).

Belongs to the sorting nexin family. In terms of assembly, forms heterodimers with BAR domain-containing sorting nexins SNX1 and SNX2. The heterodimers are proposed to self-assemble into helical arrays on the membrane to stabilize and expand local membrane curvature underlying endosomal tubule formation. Thought to be a component of the originally described retromer complex (also called SNX-BAR retromer) which is a pentamer containing the heterotrimeric retromer cargo-selective complex (CSC), also described as vacuolar protein sorting subcomplex (VPS), and a heterodimeric membrane-deforming subcomplex formed between SNX1 or SNX2 and SNX5 or SNX6 (also called SNX-BAR subcomplex); the respective CSC and SNX-BAR subcomplexes associate with low affinity. Interacts with SNX1, SNX2, VPS26A, VPS29, VPS35, CDKN1B, TGFB receptors, BACE1, BRMS1, PIP5K1C isoform 3. Interacts with DCTN1; the association with DCTN1 is involved in movement of retromer-c ontaining vesicles toward the TGN. Interacts with CDKN1B and GIT1. Interacts with PIM1; translocating SNX6 to the nucleus. Post-translationally, in vitro phosphorylated by PIM1; not affecting PIM1-dependent nuclear translocation.

The protein localises to the early endosome. The protein resides in the early endosome membrane. Its subcellular location is the cytoplasmic vesicle. It localises to the cytoplasm. It is found in the nucleus. Its function is as follows. Involved in several stages of intracellular trafficking. Interacts with membranes phosphatidylinositol 3,4-bisphosphate and/or phosphatidylinositol 4,5-bisphosphate. Acts in part as component of the retromer membrane-deforming SNX-BAR subcomplex. The SNX-BAR retromer mediates retrograde transport of cargo proteins from endosomes to the trans-Golgi network (TGN) and is involved in endosome-to-plasma membrane transport for cargo protein recycling. The SNX-BAR subcomplex functions to deform the donor membrane into a tubular profile called endosome-to-TGN transport carrier (ETC). Does not have in vitro vesicle-to-membrane remodeling activity. Involved in retrograde endosome-to-TGN transport of lysosomal enzyme receptor IGF2R. May function as link between transport vesicles and dynactin. Negatively regulates retrograde transport of BACE1 from the cell surface to the trans-Golgi network. Involved in E-cadherin sorting and degradation; inhibits PIP5K1C isoform 3-mediated E-cadherin degradation. In association with GIT1 involved in EGFR degradation. Promotes lysosomal degradation of CDKN1B. May contribute to transcription regulation. The chain is Sorting nexin-6 (SNX6) from Homo sapiens (Human).